The sequence spans 1082 residues: Mediator of RNA polymerase II transcription subunit 14 (1082 aa).

2 disordered regions span residues 1–80 (MTTT…APPP) and 319–343 (EATSTNGDSENNEENSSSNGNNLPL). At Thr-2 the chain carries N-acetylthreonine. Ser-7 is modified (phosphoserine). Over residues 13–28 (NEERLSNEMHALKNRS) the composition is skewed to basic and acidic residues. The segment covering 29-59 (EQNGQEQQGPVKNTQLHGPSATDPETTATQK) has biased composition (polar residues). The span at 321 to 340 (TSTNGDSENNEENSSSNGNN) shows a compositional bias: low complexity. Thr-1036 carries the post-translational modification Phosphothreonine.

It belongs to the Mediator complex subunit 14 family. Component of the Mediator complex, which is composed of at least 21 subunits that form three structurally distinct submodules. The Mediator head module contains MED6, MED8, MED11, SRB4/MED17, SRB5/MED18, ROX3/MED19, SRB2/MED20 and SRB6/MED22, the middle module contains MED1, MED4, NUT1/MED5, MED7, CSE2/MED9, NUT2/MED10, SRB7/MED21 and SOH1/MED31, and the tail module contains MED2, PGD1/MED3, RGR1/MED14, GAL11/MED15 and SIN4/MED16. The head and the middle modules interact directly with RNA polymerase II, whereas the elongated tail module interacts with gene-specific regulatory proteins.

The protein resides in the nucleus. In terms of biological role, component of the Mediator complex, a coactivator involved in the regulated transcription of nearly all RNA polymerase II-dependent genes. Mediator functions as a bridge to convey information from gene-specific regulatory proteins to the basal RNA polymerase II transcription machinery. The Mediator complex, having a compact conformation in its free form, is recruited to promoters by direct interactions with regulatory proteins and serves for the assembly of a functional preinitiation complex with RNA polymerase II and the general transcription factors. The Mediator complex unfolds to an extended conformation and partially surrounds RNA polymerase II, specifically interacting with the unphosphorylated form of the C-terminal domain (CTD) of RNA polymerase II. The Mediator complex dissociates from the RNA polymerase II holoenzyme and stays at the promoter when transcriptional elongation begins. The chain is Mediator of RNA polymerase II transcription subunit 14 (RGR1) from Saccharomyces cerevisiae (strain ATCC 204508 / S288c) (Baker's yeast).